Reading from the N-terminus, the 176-residue chain is ATP synthase subunit b (176 aa).

The chain crosses the membrane as a helical span at residues Ser-14 to Leu-34.

The protein belongs to the ATPase B chain family. In terms of assembly, F-type ATPases have 2 components, F(1) - the catalytic core - and F(0) - the membrane proton channel. F(1) has five subunits: alpha(3), beta(3), gamma(1), delta(1), epsilon(1). F(0) has three main subunits: a(1), b(2) and c(10-14). The alpha and beta chains form an alternating ring which encloses part of the gamma chain. F(1) is attached to F(0) by a central stalk formed by the gamma and epsilon chains, while a peripheral stalk is formed by the delta and b chains.

The protein resides in the cell membrane. In terms of biological role, f(1)F(0) ATP synthase produces ATP from ADP in the presence of a proton or sodium gradient. F-type ATPases consist of two structural domains, F(1) containing the extramembraneous catalytic core and F(0) containing the membrane proton channel, linked together by a central stalk and a peripheral stalk. During catalysis, ATP synthesis in the catalytic domain of F(1) is coupled via a rotary mechanism of the central stalk subunits to proton translocation. Functionally, component of the F(0) channel, it forms part of the peripheral stalk, linking F(1) to F(0). This chain is ATP synthase subunit b, found in Enterococcus faecalis (strain ATCC 700802 / V583).